We begin with the raw amino-acid sequence, 370 residues long: tRNA-specific 2-thiouridylase MnmA (370 aa).

ATP-binding positions include 10–17 and Met-36; that span reads AMSGGVDS. The active-site Nucleophile is the Cys-111. A disulfide bridge connects residues Cys-111 and Cys-209. Residue Gly-135 participates in ATP binding. An interaction with tRNA region spans residues 159–161; it reads KDQ. Catalysis depends on Cys-209, which acts as the Cysteine persulfide intermediate.

The protein belongs to the MnmA/TRMU family.

Its subcellular location is the cytoplasm. The enzyme catalyses S-sulfanyl-L-cysteinyl-[protein] + uridine(34) in tRNA + AH2 + ATP = 2-thiouridine(34) in tRNA + L-cysteinyl-[protein] + A + AMP + diphosphate + H(+). Its function is as follows. Catalyzes the 2-thiolation of uridine at the wobble position (U34) of tRNA, leading to the formation of s(2)U34. This Koribacter versatilis (strain Ellin345) protein is tRNA-specific 2-thiouridylase MnmA.